The primary structure comprises 226 residues: Methylamine utilization ferredoxin-type protein MauM (226 aa).

4Fe-4S ferredoxin-type domains follow at residues proline 59–tryptophan 87, threonine 95–threonine 127, valine 136–isoleucine 172, and glutamine 180–arginine 211. Cysteine 67, cysteine 70, cysteine 73, cysteine 77, cysteine 105, cysteine 108, cysteine 113, cysteine 117, cysteine 145, cysteine 153, cysteine 156, cysteine 160, cysteine 189, cysteine 192, cysteine 195, and cysteine 199 together coordinate [4Fe-4S] cluster.

It participates in one-carbon metabolism; methylamine degradation. Functionally, involved in electron transfer. This chain is Methylamine utilization ferredoxin-type protein MauM (mauM), found in Methylophilus methylotrophus (Bacterium W3A1).